The following is a 248-amino-acid chain: ATP synthase subunit a, chloroplastic (248 aa).

5 helical membrane passes run 35 to 55 (GQVF…AIAG), 94 to 114 (IPYI…GALI), 133 to 153 (INTT…AGLS), 202 to 222 (VFTL…GLFA), and 224 to 244 (SIQA…ALEG).

This sequence belongs to the ATPase A chain family. In terms of assembly, F-type ATPases have 2 components, CF(1) - the catalytic core - and CF(0) - the membrane proton channel. CF(1) has five subunits: alpha(3), beta(3), gamma(1), delta(1), epsilon(1). CF(0) has four main subunits: a, b, b' and c.

The protein localises to the plastid. Its subcellular location is the chloroplast thylakoid membrane. Functionally, key component of the proton channel; it plays a direct role in the translocation of protons across the membrane. This chain is ATP synthase subunit a, chloroplastic, found in Antithamnion sp. (Red alga).